A 132-amino-acid chain; its full sequence is MVAIPRLRDTATVFVLSGYEYFLGFLIICSLVPVLALAASALLRPKSGRMIRLTTYESGMEPIGGAWIQFNVRYYMFALVFVIFDVETVFLYPWAVAFHQLGLLAFIEALIFIAILVVALVYAWRKRALEWS.

Transmembrane regions (helical) follow at residues 22–42 (FLGF…ASAL), 76–96 (MFAL…PWAV), and 101–121 (LGLL…VALV).

The protein belongs to the complex I subunit 3 family. In terms of assembly, NDH-1 can be composed of about 15 different subunits; different subcomplexes with different compositions have been identified which probably have different functions.

Its subcellular location is the cellular thylakoid membrane. The enzyme catalyses a plastoquinone + NADH + (n+1) H(+)(in) = a plastoquinol + NAD(+) + n H(+)(out). The catalysed reaction is a plastoquinone + NADPH + (n+1) H(+)(in) = a plastoquinol + NADP(+) + n H(+)(out). In terms of biological role, NDH-1 shuttles electrons from an unknown electron donor, via FMN and iron-sulfur (Fe-S) centers, to quinones in the respiratory and/or the photosynthetic chain. The immediate electron acceptor for the enzyme in this species is believed to be plastoquinone. Couples the redox reaction to proton translocation, and thus conserves the redox energy in a proton gradient. Cyanobacterial NDH-1 also plays a role in inorganic carbon-concentration. The sequence is that of NAD(P)H-quinone oxidoreductase subunit 3 (ndhC) from Thermosynechococcus vestitus (strain NIES-2133 / IAM M-273 / BP-1).